The chain runs to 365 residues: Peptide chain release factor 2 (365 aa).

The residue at position 252 (Q252) is an N5-methylglutamine.

The protein belongs to the prokaryotic/mitochondrial release factor family. Post-translationally, methylated by PrmC. Methylation increases the termination efficiency of RF2.

Its subcellular location is the cytoplasm. In terms of biological role, peptide chain release factor 2 directs the termination of translation in response to the peptide chain termination codons UGA and UAA. This chain is Peptide chain release factor 2 (prfB), found in Salmonella typhimurium (strain LT2 / SGSC1412 / ATCC 700720).